The primary structure comprises 633 residues: Probable potassium transport system protein Kup 3 (633 aa).

A run of 11 helical transmembrane segments spans residues Leu-61–Leu-81, Pro-107–Ile-127, Val-143–Phe-163, Val-173–Val-193, Ala-211–Leu-231, Trp-255–Leu-275, Leu-287–Ile-307, Ile-345–Phe-365, Leu-371–Phe-391, Ala-402–Ala-422, and Ile-427–Thr-447.

It belongs to the HAK/KUP transporter (TC 2.A.72) family.

The protein resides in the cell inner membrane. It catalyses the reaction K(+)(in) + H(+)(in) = K(+)(out) + H(+)(out). Transport of potassium into the cell. Likely operates as a K(+):H(+) symporter. This is Probable potassium transport system protein Kup 3 from Sinorhizobium medicae (strain WSM419) (Ensifer medicae).